Consider the following 800-residue polypeptide: Aldehyde dehydrogenase family 16 member A1 (800 aa).

Belongs to the aldehyde dehydrogenase family. In terms of assembly, interacts with SPG21.

The protein is Aldehyde dehydrogenase family 16 member A1 (ALDH16A1) of Bos taurus (Bovine).